The primary structure comprises 439 residues: MSKKLHLISLGCTKNLVDSEVMLGRLKSYEITPLIEKADVIIVNTCGFIEAAKQESLSVLFEALERRKKGAILVASGCLSERYHEELLREIPEIDIITGVGDYDKIDQMVRERQGFHSGEVFLASEEQERVITGSSVHAYVKLSEGCNQTCSFCAIPQFKGKLHSRTLESTLKEVKNLIAKGFTDFSFIAQDTSSYLRDRGEKEGLIQLIGALDSLEGIKSARILYLYPSTASAKLIQAIQKSQVVQNYFDMPLQHIAESMLKRMKRGANQKKHKELLERMRQVPHSFVRTTLILGHPGESEEEFEELCRFLEEFRFDRVNLFAYSDEEGTSAHKMEGKLDKRVINARLKRLDKIIQKQHRALLKEMVGQEIPVILEGGSSEHEFFYSARDARWAPEIDGEILINETLLPQPAPGHYWAKITQVAGKQLLATLTRRWEK.

The region spanning 3 to 115 (KKLHLISLGC…IDQMVRERQG (113 aa)) is the MTTase N-terminal domain. Positions 12, 46, 78, 147, 151, and 154 each coordinate [4Fe-4S] cluster. Residues 133-362 (TGSSVHAYVK…DKIIQKQHRA (230 aa)) enclose the Radical SAM core domain.

Belongs to the methylthiotransferase family. RimO subfamily. It depends on [4Fe-4S] cluster as a cofactor.

It localises to the cytoplasm. It catalyses the reaction L-aspartate(89)-[ribosomal protein uS12]-hydrogen + (sulfur carrier)-SH + AH2 + 2 S-adenosyl-L-methionine = 3-methylsulfanyl-L-aspartate(89)-[ribosomal protein uS12]-hydrogen + (sulfur carrier)-H + 5'-deoxyadenosine + L-methionine + A + S-adenosyl-L-homocysteine + 2 H(+). Functionally, catalyzes the methylthiolation of an aspartic acid residue of ribosomal protein uS12. The chain is Ribosomal protein uS12 methylthiotransferase RimO from Wolinella succinogenes (strain ATCC 29543 / DSM 1740 / CCUG 13145 / JCM 31913 / LMG 7466 / NCTC 11488 / FDC 602W) (Vibrio succinogenes).